The primary structure comprises 402 residues: NADH dehydrogenase [ubiquinone] 1 alpha subcomplex subunit 9, mitochondrial (402 aa).

Residues methionine 1–tyrosine 43 constitute a mitochondrion transit peptide.

Belongs to the complex I NDUFA9 subunit family. In terms of assembly, complex I is composed of at least 49 different subunits. This a component of the hydrophobic protein fraction. Requires FAD as cofactor.

The protein resides in the mitochondrion matrix. Accessory subunit of the mitochondrial membrane respiratory chain NADH dehydrogenase (Complex I), that is believed not to be involved in catalysis. Complex I functions in the transfer of electrons from NADH to the respiratory chain. The immediate electron acceptor for the enzyme is believed to be ubiquinone. This is NADH dehydrogenase [ubiquinone] 1 alpha subcomplex subunit 9, mitochondrial from Arabidopsis thaliana (Mouse-ear cress).